The sequence spans 371 residues: Vasopressin V2 receptor (371 aa).

The disordered stretch occupies residues 1-27; sequence MILVSTTSAVPGALSSPSSPSNSSQEE. Over 1–38 the chain is Extracellular; it reads MILVSTTSAVPGALSSPSSPSNSSQEELLDDRDPLLVR. A compositionally biased stretch (low complexity) spans 15-24; the sequence is SSPSSPSNSS. Asn-22 is a glycosylation site (N-linked (GlcNAc...) asparagine). Residues 39-63 traverse the membrane as a helical segment; the sequence is AELALLSTIFVAVALSNGLVLGALI. Residues 64-77 are Cytoplasmic-facing; the sequence is RRGRRGRWAPMHVF. The chain crosses the membrane as a helical span at residues 78–98; the sequence is ISHLCLADLAVALFQVLPQLA. Topologically, residues 99–113 are extracellular; sequence WDATDRFHGPDALCR. A helical transmembrane segment spans residues 114–135; it reads AVKYLQMVGMYASSYMILAMTL. The Cytoplasmic segment spans residues 136–159; the sequence is DRHRAICRPMLAYRHGGGARWNRP. Residues 160-180 form a helical membrane-spanning segment; it reads VLVAWAFSLLLSLPQLFIFAQ. At 181–200 the chain is on the extracellular side; that stretch reads RDVGNGSGVFDCWARFAEPW. An N-linked (GlcNAc...) asparagine glycan is attached at Asn-185. The helical transmembrane segment at 201-220 threads the bilayer; that stretch reads GLRAYVTWIALMVFVAPALG. The Cytoplasmic portion of the chain corresponds to 221-271; it reads IAACQVLIFREIHASLVPGPSERAGRRRRGHRTGSPSEGAHVSAAMAKTVR. The tract at residues 240 to 259 is disordered; it reads PSERAGRRRRGHRTGSPSEG. Residues 272 to 293 traverse the membrane as a helical segment; it reads MTLVIVIVYVLCWAPFFLVQLW. At 294–308 the chain is on the extracellular side; the sequence is AAWDPEAPLERPPFV. A helical membrane pass occupies residues 309-328; it reads LLMLLASLNSCTNPWIYASF. The Cytoplasmic segment spans residues 329-371; the sequence is SSSVSSELRSLLCCAQRHTTHSLGPQDESCATASSSLMKDTPS. 2 S-palmitoyl cysteine lipidation sites follow: Cys-341 and Cys-342. The segment at 349–371 is disordered; sequence HSLGPQDESCATASSSLMKDTPS. Residues 357-371 are compositionally biased toward polar residues; the sequence is SCATASSSLMKDTPS.

This sequence belongs to the G-protein coupled receptor 1 family. Vasopressin/oxytocin receptor subfamily. As to quaternary structure, interacts with ARRDC4. Identified in a complex containing at least ARRDC4, V2R and HGS. Interacts with TMEM147. As to expression, highly expressed in kidney (at protein level) and moderately expressed in liver (at protein level). No or extremely low expression in left ventricule, muscle, bone and brain (at protein level).

Its subcellular location is the cell membrane. Receptor for arginine vasopressin. The activity of this receptor is mediated by G proteins which activate adenylate cyclase. Involved in renal water reabsorption. This chain is Vasopressin V2 receptor (Avpr2), found in Mus musculus (Mouse).